The chain runs to 300 residues: Nucleotide-binding protein TM1040_2438 (300 aa).

24–31 (GPSGAGRT) provides a ligand contact to ATP. 71-74 (DPRN) lines the GTP pocket.

This sequence belongs to the RapZ-like family.

Displays ATPase and GTPase activities. The polypeptide is Nucleotide-binding protein TM1040_2438 (Ruegeria sp. (strain TM1040) (Silicibacter sp.)).